A 215-amino-acid polypeptide reads, in one-letter code: MTWKDIIENEQQKPYYGKLKEEIDKRYENSIVFPEKQNIFKAFSLTKFEDLKVVILGQDPYHGIGQAQGLSFSTPSNIKNPPSMVNILKEINDDLGKKSVCEDGDLTPWAKQGIMLLNTILTVEQGLAKSHHNLGWEIFTDNIIKYISDNKENVIFLLWGSPAISKTKLIDKNKHFILTAPHPSPLSVYRGFYGCKHFSKTNEILKKLNKEEIIW.

D59 functions as the Proton acceptor in the catalytic mechanism.

It belongs to the uracil-DNA glycosylase (UDG) superfamily. UNG family.

It localises to the cytoplasm. The enzyme catalyses Hydrolyzes single-stranded DNA or mismatched double-stranded DNA and polynucleotides, releasing free uracil.. In terms of biological role, excises uracil residues from the DNA which can arise as a result of misincorporation of dUMP residues by DNA polymerase or due to deamination of cytosine. The chain is Uracil-DNA glycosylase from Aliarcobacter butzleri (strain RM4018) (Arcobacter butzleri).